Here is a 532-residue protein sequence, read N- to C-terminus: CTP synthase (532 aa).

The tract at residues 1-268 (MTTKYIFVTG…DEIVCDHLNL (268 aa)) is amidoligase domain. Residue S14 participates in CTP binding. Position 14 (S14) interacts with UTP. 15–20 (SLGKGI) is a binding site for ATP. Y55 contributes to the L-glutamine binding site. D72 serves as a coordination point for ATP. Positions 72 and 142 each coordinate Mg(2+). Residues 149–151 (DIE), 189–194 (KSKPTQ), and K225 contribute to the CTP site. Residues 189 to 194 (KSKPTQ) and K225 contribute to the UTP site. An ATP-binding site is contributed by 241–243 (RDA). The Glutamine amidotransferase type-1 domain occupies 293 to 532 (KIALVGKYVA…REFIQASLRK (240 aa)). G355 serves as a coordination point for L-glutamine. C382 acts as the Nucleophile; for glutamine hydrolysis in catalysis. L-glutamine contacts are provided by residues 383–386 (LGMQ), E406, and R463. Active-site residues include H508 and E510.

The protein belongs to the CTP synthase family. As to quaternary structure, homotetramer.

The catalysed reaction is UTP + L-glutamine + ATP + H2O = CTP + L-glutamate + ADP + phosphate + 2 H(+). It catalyses the reaction L-glutamine + H2O = L-glutamate + NH4(+). The enzyme catalyses UTP + NH4(+) + ATP = CTP + ADP + phosphate + 2 H(+). The protein operates within pyrimidine metabolism; CTP biosynthesis via de novo pathway; CTP from UDP: step 2/2. Allosterically activated by GTP, when glutamine is the substrate; GTP has no effect on the reaction when ammonia is the substrate. The allosteric effector GTP functions by stabilizing the protein conformation that binds the tetrahedral intermediate(s) formed during glutamine hydrolysis. Inhibited by the product CTP, via allosteric rather than competitive inhibition. Catalyzes the ATP-dependent amination of UTP to CTP with either L-glutamine or ammonia as the source of nitrogen. Regulates intracellular CTP levels through interactions with the four ribonucleotide triphosphates. The sequence is that of CTP synthase from Halalkalibacterium halodurans (strain ATCC BAA-125 / DSM 18197 / FERM 7344 / JCM 9153 / C-125) (Bacillus halodurans).